Here is a 481-residue protein sequence, read N- to C-terminus: UDP-N-acetylmuramoyl-L-alanyl-D-glutamate--L-lysine ligase (481 aa).

Position 42 (Ser42) interacts with UDP-N-acetyl-alpha-D-muramoyl-L-alanyl-D-glutamate. Residue Gly118–Thr124 participates in ATP binding. UDP-N-acetyl-alpha-D-muramoyl-L-alanyl-D-glutamate-binding positions include Gln158, Thr160–Thr161, Ser187, and Arg195. Residue Lys229 is modified to N6-carboxylysine. Residues Asp404–Asn407 carry the L-lysine recognition motif motif.

Belongs to the MurCDEF family. MurE subfamily. Post-translationally, carboxylation is probably crucial for Mg(2+) binding and, consequently, for the gamma-phosphate positioning of ATP.

Its subcellular location is the cytoplasm. It carries out the reaction UDP-N-acetyl-alpha-D-muramoyl-L-alanyl-D-glutamate + L-lysine + ATP = UDP-N-acetyl-alpha-D-muramoyl-L-alanyl-gamma-D-glutamyl-L-lysine + ADP + phosphate + H(+). The protein operates within cell wall biogenesis; peptidoglycan biosynthesis. Catalyzes the addition of L-lysine to the nucleotide precursor UDP-N-acetylmuramoyl-L-alanyl-D-glutamate (UMAG) in the biosynthesis of bacterial cell-wall peptidoglycan. This Streptococcus pyogenes serotype M3 (strain SSI-1) protein is UDP-N-acetylmuramoyl-L-alanyl-D-glutamate--L-lysine ligase.